The primary structure comprises 205 residues: Dephospho-CoA kinase (205 aa).

The 197-residue stretch at 5 to 201 folds into the DPCK domain; it reads VVGLTGGIGS…QRYLQLSGNH (197 aa). Residue 13 to 18 participates in ATP binding; that stretch reads GSGKTT.

It belongs to the CoaE family.

It is found in the cytoplasm. It carries out the reaction 3'-dephospho-CoA + ATP = ADP + CoA + H(+). It participates in cofactor biosynthesis; coenzyme A biosynthesis; CoA from (R)-pantothenate: step 5/5. In terms of biological role, catalyzes the phosphorylation of the 3'-hydroxyl group of dephosphocoenzyme A to form coenzyme A. The chain is Dephospho-CoA kinase from Shewanella oneidensis (strain ATCC 700550 / JCM 31522 / CIP 106686 / LMG 19005 / NCIMB 14063 / MR-1).